The sequence spans 750 residues: Catalase-peroxidase 1 (750 aa).

The segment at residues 90–238 is a cross-link (tryptophyl-tyrosyl-methioninium (Trp-Tyr) (with M-264)); sequence WHSAGTYRVM…VSAAHMGLIY (149 aa). The Proton acceptor role is filled by His-91. The segment at 199–218 is disordered; it reads NEGHKESGVIDGSESKKGHK. Residues 200-218 show a composition bias toward basic and acidic residues; the sequence is EGHKESGVIDGSESKKGHK. The segment at residues 238–264 is a cross-link (tryptophyl-tyrosyl-methioninium (Tyr-Met) (with W-90)); that stretch reads YVNPEGPDGIPDPVAAARDIRTTFSRM. His-279 contacts heme b.

The protein belongs to the peroxidase family. Peroxidase/catalase subfamily. In terms of assembly, homodimer or homotetramer. Predominantly homodimeric. Requires heme b as cofactor. In terms of processing, formation of the three residue Trp-Tyr-Met cross-link is important for the catalase, but not the peroxidase activity of the enzyme.

It localises to the cytoplasm. It carries out the reaction H2O2 + AH2 = A + 2 H2O. It catalyses the reaction 2 H2O2 = O2 + 2 H2O. Its function is as follows. Bifunctional enzyme with both catalase and broad-spectrum peroxidase activity. This Pyricularia oryzae (strain 70-15 / ATCC MYA-4617 / FGSC 8958) (Rice blast fungus) protein is Catalase-peroxidase 1.